The primary structure comprises 477 residues: MREIEFTFKGLLIRLSLALSDLIFFNIALALAIVLINGFPGEILTGIPQHELDLKIATHILLSVICVGWFWVRLRHYTYRKPFWFELKEVFRTILIFSIVDLSVSALSKWELSRWIWILTWLLSMAMVPFGRACVKRLLNRKKLWKKQSIIIGSGKNAQEAWQALQSEEMMGFDVIAFYDVDGSQTALELFGVPVLKEEQQLWSLVDSDTQFIVAVEYEQSQSRDRWLKNLATHNCRSVSVIPSLRGVPLYGTDMAYIFSHEVMILRVSNNLAKHSSRFLKRTFDLVGALSIITLLLPALVILIFMVSRDGGAPIYGHERVGRDGRKFKCLKFRSMVVNSKEVLEEVLRTDPVARAEWDEDFKLKNDPRITRIGHFIRKTSLDELPQLWNVVRGEMSLVGPRPVIEAELERYAGDVDYYFMAKPGMTGLWQVSGRNDVSYETRVYFDSWYVKNWSLWNDIAILFKTIGVVLKRDGAY.

Transmembrane regions (helical) follow at residues 16 to 36 (SLAL…IVLI), 52 to 72 (LDLK…WFWV), 93 to 113 (TILI…WELS), 115 to 135 (WIWI…RACV), 175 to 195 (VIAF…GVPV), and 284 to 304 (FDLV…VILI). Topologically, residues 305–477 (FMVSRDGGAP…GVVLKRDGAY (173 aa)) are cytoplasmic.

It belongs to the bacterial sugar transferase family.

The protein resides in the cell membrane. It functions in the pathway glycan metabolism; exopolysaccharide biosynthesis. Its function is as follows. Involved in the biosynthesis of amylovoran which functions as a virulence factor. May act as a sugar transferase and may be involved in the export of the repeating unit by flipping the lipid carrier to the periplasmic face of the inner membrane. The sequence is that of UDP-galactose-lipid carrier transferase (amsG) from Erwinia amylovora (Fire blight bacteria).